The chain runs to 892 residues: MERKEDDLKGGCWNQPAVAEEFETLKDLAMDFTVEDWKDLESEWDQRDLFWDVTLNHYQDMFSFTDTSQPSLTSQPDVREELEATSTEVPETKSSPLQSGFVEEDFSQIMEIFSNGQLNFEACIGEDWLNSFLGDPESLPRPDISDKESPADHQSPESKSGLSPGPPLCTREDAVMSASPEKTLTPVILKESRSDLSQEDSVQGHEKPYKCSECGESFSQSHHLIQHWVLHTSGEPPIWREQQRGLSQGAHFPMCPGTPASYESYTCQECGKRFSQNVYLQWHQKIHTGEKLCKTQSDSNLEGLSRSPSVEPGKQRLSKDTDSAKPSTIHGQDQEKPPTGESRDQENLHESQPGDRPSVLHPKPLRHQKTPTNAKCFRCKKCGETFSGAFHLAKHQRAHAQRLYKCASCPAVFNLSKHCFQHRKSHFPSAACECQGCRKSFNWRSSLIKHQAIHKGEKPYKCDECGKAFNHSSTLKIHQRIHSGQKPHKCSECGKAFCRRTDLTEHQRVHSGFRPHQCPVCARTFNRPSHLVRHRLRHAEERHFGCAKCKETFIYKEQLERHNKIHTIEGLYECKQCGEHFICRSTLNCHLSIHIRENTSEKVVGQNSQHTEKCFKNTKCRKAPNHSRYLGQHEKIHAQVTSGECDPCGETYDQSVQPICHQSICAGVKPSECAEPEKCTRNTSASEHHPSQREPSFKCDIYNRAFKQRAHLSKHQLIHITEKPFKCNECDRAFKQSNYLIQHQKTHTAEKHFECSECGKTFHQRSCLSKHQKIHSGEKPFKCGDCGKAFISGAQLIRHQRIHTGEKPYVCQECGKTFSQSSCLTLHLRIHTGEKPYTCGTCGKAFAQRANQRKHERIHTGEKPYACGLCGKAFGLRTHLQQHQRIHTKAKP.

In terms of domain architecture, KRAB spans 23 to 101 (ETLKDLAMDF…TKSSPLQSGF (79 aa)). 2 stretches are compositionally biased toward polar residues: residues 66-76 (DTSQPSLTSQP) and 84-97 (ATST…SSPL). Disordered stretches follow at residues 66–97 (DTSQ…SSPL) and 134–203 (GDPE…DSVQ). Composition is skewed to basic and acidic residues over residues 138-156 (SLPR…HQSP) and 190-203 (KESR…DSVQ). 2 consecutive C2H2-type zinc fingers follow at residues 209-231 (YKCS…WVLH) and 265-287 (YTCQ…QKIH). Over residues 297–308 (SDSNLEGLSRSP) the composition is skewed to polar residues. A disordered region spans residues 297–370 (SDSNLEGLSR…HPKPLRHQKT (74 aa)). Basic and acidic residues-rich tracts occupy residues 313-323 (GKQRLSKDTDS) and 332-353 (QDQE…ESQP). C2H2-type zinc fingers lie at residues 377–399 (FRCK…QRAH), 404–426 (YKCA…RKSH), 432–454 (CECQ…QAIH), 460–482 (YKCD…QRIH), 488–510 (HKCS…QRVH), 516–538 (HQCP…RLRH), 544–566 (FGCA…NKIH), and 572–594 (YECK…LSIH). Residue lysine 476 forms a Glycyl lysine isopeptide (Lys-Gly) (interchain with G-Cter in SUMO2) linkage. Lysine 602 participates in a covalent cross-link: Glycyl lysine isopeptide (Lys-Gly) (interchain with G-Cter in SUMO2). Residues 697 to 719 (FKCDIYNRAFKQRAHLSKHQLIH) form a C2H2-type 11; degenerate zinc finger. 6 consecutive C2H2-type zinc fingers follow at residues 725–747 (FKCN…QKTH), 753–775 (FECS…QKIH), 781–803 (FKCG…QRIH), 809–831 (YVCQ…LRIH), 837–859 (YTCG…ERIH), and 865–887 (YACG…QRIH).

This sequence belongs to the krueppel C2H2-type zinc-finger protein family. Interacts with the SLBP/pre-mRNA complex but not with SLBP alone. Interacts with LSM11 in a U7 snRNP-dependent manner.

The protein resides in the nucleus. In terms of biological role, involved in histone 3'-end pre-mRNA processing by associating with U7 snRNP and interacting with SLBP/pre-mRNA complex. Increases histone 3'-end pre-mRNA processing but has no effect on U7 snRNP levels, when overexpressed. Required for cell cycle progression from G1 to S phases. This is Zinc finger protein 473 homolog (Znf473) from Mus musculus (Mouse).